We begin with the raw amino-acid sequence, 635 residues long: 1-deoxy-D-xylulose-5-phosphate synthase (635 aa).

Residues His74 and 115 to 117 (GHA) contribute to the thiamine diphosphate site. Residue Asp146 participates in Mg(2+) binding. Thiamine diphosphate is bound by residues 147–148 (GA), Asn175, Tyr285, and Glu367. Position 175 (Asn175) interacts with Mg(2+).

It belongs to the transketolase family. DXPS subfamily. Homodimer. Mg(2+) is required as a cofactor. Thiamine diphosphate serves as cofactor.

It carries out the reaction D-glyceraldehyde 3-phosphate + pyruvate + H(+) = 1-deoxy-D-xylulose 5-phosphate + CO2. It participates in metabolic intermediate biosynthesis; 1-deoxy-D-xylulose 5-phosphate biosynthesis; 1-deoxy-D-xylulose 5-phosphate from D-glyceraldehyde 3-phosphate and pyruvate: step 1/1. Its function is as follows. Catalyzes the acyloin condensation reaction between C atoms 2 and 3 of pyruvate and glyceraldehyde 3-phosphate to yield 1-deoxy-D-xylulose-5-phosphate (DXP). This is 1-deoxy-D-xylulose-5-phosphate synthase from Anaeromyxobacter sp. (strain Fw109-5).